A 972-amino-acid polypeptide reads, in one-letter code: Isoleucine--tRNA ligase (972 aa).

The 'HIGH' region motif lies at 63-73 (PYANGNIHIGH). Residue E603 coordinates L-isoleucyl-5'-AMP. Positions 644–648 (KMSKS) match the 'KMSKS' region motif. Residue K647 participates in ATP binding.

Belongs to the class-I aminoacyl-tRNA synthetase family. IleS type 1 subfamily. As to quaternary structure, monomer.

Its subcellular location is the cytoplasm. The enzyme catalyses tRNA(Ile) + L-isoleucine + ATP = L-isoleucyl-tRNA(Ile) + AMP + diphosphate. Functionally, catalyzes the attachment of isoleucine to tRNA(Ile). As IleRS can inadvertently accommodate and process structurally similar amino acids such as valine, to avoid such errors it has two additional distinct tRNA(Ile)-dependent editing activities. One activity is designated as 'pretransfer' editing and involves the hydrolysis of activated Val-AMP. The other activity is designated 'posttransfer' editing and involves deacylation of mischarged Val-tRNA(Ile). This chain is Isoleucine--tRNA ligase, found in Brucella abortus (strain 2308).